Reading from the N-terminus, the 120-residue chain is uncharacterized protein (120 aa).

3 helical membrane passes run 20 to 39 (FFWPALIVIILTIAAFCYLL), 52 to 71 (GSSLVGLLGGILALYLLFSI), and 86 to 108 (ILVVLAYFGGFLASTMLLYSIIG).

It localises to the cell membrane. This is an uncharacterized protein from Pasteurella multocida (strain Pm70).